We begin with the raw amino-acid sequence, 393 residues long: Fractalkine (393 aa).

An N-terminal signal peptide occupies residues Met1–Gly24. The interval Gln25–Gly100 is chemokine and involved in interaction with ITGAV:ITGB3 and ITGA4:ITGB1. Over Gln25 to Gln337 the chain is Extracellular. Intrachain disulfides connect Cys32/Cys58 and Cys36/Cys74. N-linked (GlcNAc...) asparagine glycosylation is present at Asn33. Residues Gly101 to Gln337 form a mucin-like stalk region. 2 disordered regions span residues Ile114–Thr184 and Glu213–Gln303. Composition is skewed to polar residues over residues Gly153–Ala172 and Ala223–Ser240. The helical transmembrane segment at Ala338 to Tyr358 threads the bilayer. Residues Gln359–Val393 are Cytoplasmic-facing.

This sequence belongs to the intercrine delta family. As to quaternary structure, monomer. Forms a ternary complex with CX3CR1 and ITGAV:ITGB3 or ITGA4:ITGB1. A soluble short form may be released by proteolytic cleavage from the long membrane-anchored form. Highest levels in brain (neurons). Significant levels in kidney, heart, lung and adrenal gland.

Its subcellular location is the cell membrane. The protein resides in the secreted. Functionally, chemokine that acts as a ligand for both CX3CR1 and integrins ITGAV:ITGB3 and ITGA4:ITGB1. The CX3CR1-CX3CL1 signaling exerts distinct functions in different tissue compartments, such as immune response, inflammation, cell adhesion and chemotaxis. Regulates leukocyte adhesion and migration processes at the endothelium. Can activate integrins in both a CX3CR1-dependent and CX3CR1-independent manner. In the presence of CX3CR1, activates integrins by binding to the classical ligand-binding site (site 1) in integrins. In the absence of CX3CR1, binds to a second site (site 2) in integrins which is distinct from site 1 and enhances the binding of other integrin ligands to site 1. In terms of biological role, the soluble form is chemotactic for T-cells and monocytes, but not for neutrophils. The membrane-bound form promotes adhesion of those leukocytes to endothelial cells. This is Fractalkine (Cx3cl1) from Rattus norvegicus (Rat).